A 161-amino-acid chain; its full sequence is Cyclic pyranopterin monophosphate synthase (161 aa).

Substrate is bound by residues 75–77 (LCH) and 113–114 (ME). D128 is a catalytic residue.

This sequence belongs to the MoaC family. As to quaternary structure, homohexamer; trimer of dimers.

It catalyses the reaction (8S)-3',8-cyclo-7,8-dihydroguanosine 5'-triphosphate = cyclic pyranopterin phosphate + diphosphate. It participates in cofactor biosynthesis; molybdopterin biosynthesis. In terms of biological role, catalyzes the conversion of (8S)-3',8-cyclo-7,8-dihydroguanosine 5'-triphosphate to cyclic pyranopterin monophosphate (cPMP). This Shigella sonnei (strain Ss046) protein is Cyclic pyranopterin monophosphate synthase.